The chain runs to 231 residues: Phosphoribosylformylglycinamidine synthase subunit PurQ (231 aa).

The region spanning 3 to 231 (FGVLIFPGSN…ESMVGAMAKR (229 aa)) is the Glutamine amidotransferase type-1 domain. C86 serves as the catalytic Nucleophile. Active-site residues include H203 and E205.

As to quaternary structure, part of the FGAM synthase complex composed of 1 PurL, 1 PurQ and 2 PurS subunits.

The protein localises to the cytoplasm. The catalysed reaction is N(2)-formyl-N(1)-(5-phospho-beta-D-ribosyl)glycinamide + L-glutamine + ATP + H2O = 2-formamido-N(1)-(5-O-phospho-beta-D-ribosyl)acetamidine + L-glutamate + ADP + phosphate + H(+). It catalyses the reaction L-glutamine + H2O = L-glutamate + NH4(+). The protein operates within purine metabolism; IMP biosynthesis via de novo pathway; 5-amino-1-(5-phospho-D-ribosyl)imidazole from N(2)-formyl-N(1)-(5-phospho-D-ribosyl)glycinamide: step 1/2. Its function is as follows. Part of the phosphoribosylformylglycinamidine synthase complex involved in the purines biosynthetic pathway. Catalyzes the ATP-dependent conversion of formylglycinamide ribonucleotide (FGAR) and glutamine to yield formylglycinamidine ribonucleotide (FGAM) and glutamate. The FGAM synthase complex is composed of three subunits. PurQ produces an ammonia molecule by converting glutamine to glutamate. PurL transfers the ammonia molecule to FGAR to form FGAM in an ATP-dependent manner. PurS interacts with PurQ and PurL and is thought to assist in the transfer of the ammonia molecule from PurQ to PurL. The polypeptide is Phosphoribosylformylglycinamidine synthase subunit PurQ (Koribacter versatilis (strain Ellin345)).